The sequence spans 174 residues: Crossover junction endodeoxyribonuclease RuvC (174 aa).

Active-site residues include Asp8, Glu67, and Asp139. 3 residues coordinate Mg(2+): Asp8, Glu67, and Asp139.

It belongs to the RuvC family. Homodimer which binds Holliday junction (HJ) DNA. The HJ becomes 2-fold symmetrical on binding to RuvC with unstacked arms; it has a different conformation from HJ DNA in complex with RuvA. In the full resolvosome a probable DNA-RuvA(4)-RuvB(12)-RuvC(2) complex forms which resolves the HJ. Requires Mg(2+) as cofactor.

It is found in the cytoplasm. The enzyme catalyses Endonucleolytic cleavage at a junction such as a reciprocal single-stranded crossover between two homologous DNA duplexes (Holliday junction).. Functionally, the RuvA-RuvB-RuvC complex processes Holliday junction (HJ) DNA during genetic recombination and DNA repair. Endonuclease that resolves HJ intermediates. Cleaves cruciform DNA by making single-stranded nicks across the HJ at symmetrical positions within the homologous arms, yielding a 5'-phosphate and a 3'-hydroxyl group; requires a central core of homology in the junction. The consensus cleavage sequence is 5'-(A/T)TT(C/G)-3'. Cleavage occurs on the 3'-side of the TT dinucleotide at the point of strand exchange. HJ branch migration catalyzed by RuvA-RuvB allows RuvC to scan DNA until it finds its consensus sequence, where it cleaves and resolves the cruciform DNA. This chain is Crossover junction endodeoxyribonuclease RuvC, found in Pseudomonas syringae pv. syringae (strain B728a).